A 145-amino-acid chain; its full sequence is 3-hydroxyacyl-[acyl-carrier-protein] dehydratase FabZ (145 aa).

His49 is an active-site residue.

It belongs to the thioester dehydratase family. FabZ subfamily.

Its subcellular location is the cytoplasm. The enzyme catalyses a (3R)-hydroxyacyl-[ACP] = a (2E)-enoyl-[ACP] + H2O. Involved in unsaturated fatty acids biosynthesis. Catalyzes the dehydration of short chain beta-hydroxyacyl-ACPs and long chain saturated and unsaturated beta-hydroxyacyl-ACPs. This is 3-hydroxyacyl-[acyl-carrier-protein] dehydratase FabZ from Rickettsia bellii (strain RML369-C).